Reading from the N-terminus, the 496-residue chain is Glycerol kinase (496 aa).

An ADP-binding site is contributed by threonine 12. Residues threonine 12, threonine 13, and serine 14 each contribute to the ATP site. Threonine 12 contributes to the sn-glycerol 3-phosphate binding site. ADP is bound at residue arginine 16. Residues arginine 82, glutamate 83, and tyrosine 134 each coordinate sn-glycerol 3-phosphate. Glycerol-binding residues include arginine 82, glutamate 83, and tyrosine 134. A Phosphohistidine; by HPr modification is found at histidine 230. A sn-glycerol 3-phosphate-binding site is contributed by aspartate 244. Glycerol-binding residues include aspartate 244 and glutamine 245. ADP contacts are provided by threonine 266 and glycine 309. Residues threonine 266, glycine 309, glutamine 313, and glycine 410 each contribute to the ATP site. The ADP site is built by glycine 410 and asparagine 414.

Belongs to the FGGY kinase family. Homotetramer and homodimer (in equilibrium). The phosphoenolpyruvate-dependent sugar phosphotransferase system (PTS), including enzyme I, and histidine-containing protein (HPr) are required for the phosphorylation, which leads to the activation of the enzyme.

The catalysed reaction is glycerol + ATP = sn-glycerol 3-phosphate + ADP + H(+). The protein operates within polyol metabolism; glycerol degradation via glycerol kinase pathway; sn-glycerol 3-phosphate from glycerol: step 1/1. Activated by phosphorylation and inhibited by fructose 1,6-bisphosphate (FBP). Functionally, key enzyme in the regulation of glycerol uptake and metabolism. Catalyzes the phosphorylation of glycerol to yield sn-glycerol 3-phosphate. The chain is Glycerol kinase from Geobacillus kaustophilus (strain HTA426).